A 78-amino-acid chain; its full sequence is uncharacterized protein (78 aa).

A disordered region spans residues 1-78; it reads MSSNSNTDHS…VDLEGPKDEQ (78 aa). Basic and acidic residues-rich tracts occupy residues 10 to 33 and 63 to 78; these read STGD…ETES and LNLK…KDEQ.

This is an uncharacterized protein from Schizosaccharomyces pombe (strain 972 / ATCC 24843) (Fission yeast).